A 467-amino-acid polypeptide reads, in one-letter code: MTKRERIIQSVLVKVPKDAINQFLSHGSTPISVLFLAALVGVLAGLVGTYFEIAVHFVSETRTEWLKSEIGHLLPLWLAAILISAALAFVGYFLVHRFAPEAAGSGIPEIEGAMDNIRPVRWWRVIPVKFFGGMGALGSGMVLGREGPTVQMGGAVGRMVTDIFRVKDDDTRHSLLASGAAGGLAAAFNAPLAGIMFVVEEMRPQFRYSLISIRAVIISAVMANIVFRAINGQDAVITMPQYQPPELKALWLFLLLGGLFGVFGVLFNKLVTVAQDAFVALHKNDRKRYLITGTCLGGIFGLLLLYVPELTGGGIHLIPDVTNGNYSVSLLVMLFVGRVLTTLICFGSGAPGGIFAPMLALGTLFGYAFGATAKILLPDLPIEPGMFAIAGMGALFAATVRAPITGILLVIEMTNNYYLILPLIITSLGAVICAQICGGKPIYSQLLHRTIKNDKLRQQDLPEQQNS.

Residues Met1–Pro30 are Cytoplasmic-facing. A helical transmembrane segment spans residues Ile31 to Lys67. Over Ser68–Leu74 the chain is Periplasmic. Residues Pro75–Phe98 form a helical membrane-spanning segment. Positions Gly104–Pro108 match the Selectivity filter part_1 motif. Residue Ser105 coordinates chloride. The helical intramembrane region spans Ile107–Met114. The Cytoplasmic segment spans residues Asp115–Arg121. The next 2 membrane-spanning stretches (helical) occupy residues Trp122–Ser139 and Glu146–Phe164. Positions Gly144–Pro148 match the Selectivity filter part_2 motif. The Cytoplasmic segment spans residues Arg165–Ser174. 2 intramembrane regions (helical) span residues Leu175 to Ala187 and Pro191 to Val199. Residues Glu200–Ser212 are Cytoplasmic-facing. Residues Ile213–Ile230 form a helical membrane-spanning segment. Residues Asn231 to Leu250 lie on the Periplasmic side of the membrane. Residues Trp251–Val279 traverse the membrane as a helical segment. Topologically, residues Ala280 to Asp285 are cytoplasmic. Residues Arg286–Val307 form a helical membrane-spanning segment. The Periplasmic portion of the chain corresponds to Pro308–Ser327. The next 2 membrane-spanning stretches (helical) occupy residues Val328–Gly347 and Gly353–Lys374. The short motif at Gly353 to Pro357 is the Selectivity filter part_3 element. Residues Ile354 and Phe355 each coordinate chloride. The Periplasmic portion of the chain corresponds to Ile375–Pro384. The segment at residues Gly385–Thr399 is an intramembrane region (helical). The note=Loop between two helices intramembrane region spans Val400 to Ala402. Positions Pro403–Thr414 form an intramembrane region, helical. The segment at residues Asn415 to Leu419 is an intramembrane region (note=Loop between two helices). The chain crosses the membrane as a helical span at residues Ile420–Ile436. Topologically, residues Cys437 to Ser467 are cytoplasmic. Tyr443 is a binding site for chloride.

It belongs to the chloride channel (TC 2.A.49) family. ClcA subfamily. In terms of assembly, homodimer.

It is found in the cell inner membrane. The enzyme catalyses 2 chloride(in) + H(+)(out) = 2 chloride(out) + H(+)(in). Functionally, proton-coupled chloride transporter. Functions as antiport system and exchanges two chloride ions for 1 proton. Probably acts as an electrical shunt for an outwardly-directed proton pump that is linked to amino acid decarboxylation, as part of the extreme acid resistance (XAR) response. In Vibrio vulnificus (strain CMCP6), this protein is H(+)/Cl(-) exchange transporter ClcA.